Consider the following 162-residue polypeptide: Caveolin-2 (162 aa).

Topologically, residues 1–86 are cytoplasmic; it reads MGLETEKADV…FEISKYVIYK (86 aa). Tyrosine 19 bears the Phosphotyrosine; by SRC mark. A phosphoserine mark is found at serine 20 and serine 23. At tyrosine 27 the chain carries Phosphotyrosine; by SRC. Phosphoserine is present on serine 36. The helical intramembrane region spans 87-107; sequence FLTLFLAIPLAFAAGILFATL. Topologically, residues 108–162 are cytoplasmic; sequence SCLHIWIIMPFVKTCLMVLPSVQTIWKSITDVVIAPLCTSVGRSFSSVSLQLSHD.

Belongs to the caveolin family. As to quaternary structure, monomer or homodimer. Interacts with CAV1; the interaction forms a stable heterooligomeric complex that is required for targeting to lipid rafts and for caveolae formation. Tyrosine phosphorylated forms do not form heterooligomers with the Tyr-19-phosphorylated form existing as a monomer or dimer, and the Tyr-27-form as a monomer only. Interacts (tyrosine phosphorylated form) with the SH2 domain-containing proteins, RASA1, NCK1 and SRC. Interacts (tyrosine phosphorylated form) with INSR, the interaction (Tyr-27-phosphorylated form) is increased on insulin stimulation. Interacts (Tyr-19 phosphorylated form) with MAPK1 (phosphorylated form); the interaction, promoted by insulin, leads to nuclear location and MAPK1 activation. Interacts with STAT3; the interaction is increased on insulin-induced tyrosine phosphorylation leading to STAT activation. Phosphorylated on serine and tyrosine residues. CAV1 promotes phosphorylation on Ser-23 which then targets the complex to the plasma membrane, lipid rafts and caveolae. Phosphorylation on Ser-36 appears to modulate mitosis in endothelial cells. Phosphorylation on both Tyr-19 and Tyr-27 is required for insulin-induced 'Ser-727' phosphorylation of STAT3 and its activation. Phosphorylation on Tyr-19 is required for insulin-induced phosphorylation of MAPK1 and DNA binding of STAT3. Tyrosine phosphorylation is induced by both EGF and insulin (By. similarity).

Its subcellular location is the nucleus. The protein localises to the cytoplasm. It localises to the golgi apparatus membrane. It is found in the cell membrane. The protein resides in the membrane. Its subcellular location is the caveola. In terms of biological role, may act as a scaffolding protein within caveolar membranes. Interacts directly with G-protein alpha subunits and can functionally regulate their activity. Acts as an accessory protein in conjunction with CAV1 in targeting to lipid rafts and driving caveolae formation. The Ser-36 phosphorylated form has a role in modulating mitosis in endothelial cells. Positive regulator of cellular mitogenesis of the MAPK signaling pathway. Required for the insulin-stimulated nuclear translocation and activation of MAPK1 and STAT3, and the subsequent regulation of cell cycle progression. In Neofelis nebulosa (Clouded leopard), this protein is Caveolin-2 (CAV2).